The chain runs to 218 residues: Adenylate kinase (218 aa).

Residue 10–15 (GAGKGT) participates in ATP binding. The NMP stretch occupies residues 30 to 59 (STGDMLRAAVQAQTPVGIEAKKVMDAGKLV). AMP contacts are provided by residues threonine 31, arginine 36, 57-59 (KLV), 85-88 (GFPR), and glutamine 92. Positions 122–159 (GRRVHLSSGRTYHVRFNPPKKEGLDDLTGEPLVQREDD) are LID. ATP is bound by residues arginine 123 and 132–133 (TY). Arginine 156 and arginine 167 together coordinate AMP. Glycine 203 contributes to the ATP binding site.

It belongs to the adenylate kinase family. Monomer.

The protein localises to the cytoplasm. The catalysed reaction is AMP + ATP = 2 ADP. The protein operates within purine metabolism; AMP biosynthesis via salvage pathway; AMP from ADP: step 1/1. Catalyzes the reversible transfer of the terminal phosphate group between ATP and AMP. Plays an important role in cellular energy homeostasis and in adenine nucleotide metabolism. In Chlorobium phaeobacteroides (strain DSM 266 / SMG 266 / 2430), this protein is Adenylate kinase.